A 719-amino-acid polypeptide reads, in one-letter code: T-cell immunomodulatory protein homolog (719 aa).

The N-terminal stretch at M1 to I32 is a signal peptide. The Extracellular portion of the chain corresponds to F33–Y677. N-linked (GlcNAc...) asparagine glycosylation is found at N144, N277, N410, N540, and N659. A helical membrane pass occupies residues S678–L697. Residues D698–G719 lie on the Cytoplasmic side of the membrane.

The protein belongs to the TIP family.

The protein resides in the membrane. In terms of biological role, may protect the parasite against attack by the host immune system by immunomodulation. The sequence is that of T-cell immunomodulatory protein homolog from Plasmodium falciparum (isolate 3D7).